A 126-amino-acid polypeptide reads, in one-letter code: Activated RNA polymerase II transcriptional coactivator p15 (126 aa).

The segment at 1 to 63 (MPKSKELVSS…QSSNRDENMF (63 aa)) is disordered. The tract at residues 2 to 50 (PKSKELVSSSSSASDSDSEVDKKAKRKKQAAPEKPVKKQKTGESSKGAA) is regulatory. A compositionally biased stretch (low complexity) spans 7–16 (LVSSSSSASD). Residues 31–44 (AAPEKPVKKQKTGE) are compositionally biased toward basic and acidic residues. A compositionally biased stretch (low complexity) spans 45–55 (SSKGAASSKQS). Residues 76-100 (FKGKVLIDIREYWMDQEGEMKPGRK) are interaction with ssDNA.

This sequence belongs to the transcriptional coactivator PC4 family.

It is found in the nucleus. Functionally, general coactivator that functions cooperatively with TAFs and mediates functional interactions between upstream activators and the general transcriptional machinery. May be involved in stabilizing the multiprotein transcription complex. Binds single-stranded DNA. Also binds, in vitro, non-specifically to double-stranded DNA (ds DNA). The polypeptide is Activated RNA polymerase II transcriptional coactivator p15 (SUB1) (Gallus gallus (Chicken)).